Consider the following 140-residue polypeptide: Histone H2B.1, sperm (140 aa).

Positions 1-47 (MPSQRSPTKRSPTKRSPQKGAGKGGKGSKRGGKARRRGGAAVRRRRR) are disordered. 3 short sequence motifs (SPKK motif) span residues 6–9 (SPTK), 11–14 (SPTK), and 16–19 (SPQK). Composition is skewed to basic residues over residues 7–17 (PTKRSPTKRSP) and 26–47 (KGSK…RRRR). Serine 11 and serine 16 each carry phosphoserine. Serine 127 is a glycosylation site (O-linked (GlcNAc) serine). Residue lysine 135 forms a Glycyl lysine isopeptide (Lys-Gly) (interchain with G-Cter in ubiquitin) linkage.

Belongs to the histone H2B family. As to quaternary structure, the nucleosome is a histone octamer containing two molecules each of H2A, H2B, H3 and H4 assembled in one H3-H4 heterotetramer and two H2A-H2B heterodimers. The octamer wraps approximately 147 bp of DNA. Monoubiquitination of Lys-135 gives a specific tag for epigenetic transcriptional activation and is also prerequisite for histone H3 'Lys-4' and 'Lys-79' methylation. In terms of processing, phosphorylated on SPKK motifs 2 and 3; which may regulate DNA binding. Dephosphorylated during maturation of spermatids to mature sperm and rephosphorylated at fertilization. Post-translationally, glcNAcylation at Ser-127 promotes monoubiquitination of Lys-135. It fluctuates in response to extracellular glucose, and associates with transcribed genes.

It localises to the nucleus. It is found in the chromosome. Core component of nucleosome. Nucleosomes wrap and compact DNA into chromatin, limiting DNA accessibility to the cellular machineries which require DNA as a template. Histones thereby play a central role in transcription regulation, DNA repair, DNA replication and chromosomal stability. DNA accessibility is regulated via a complex set of post-translational modifications of histones, also called histone code, and nucleosome remodeling. The polypeptide is Histone H2B.1, sperm (Strongylocentrotus purpuratus (Purple sea urchin)).